We begin with the raw amino-acid sequence, 180 residues long: Progesterone receptor (180 aa).

Residues 1–11 (KNCPACRLRKC) form an NR C4-type zinc finger. Positions 1–16 (KNCPACRLRKCCQAGM) form a DNA-binding region, nuclear receptor. Phosphoserine is present on serine 60. One can recognise an NR LBD domain in the interval 63 to 180 (QEIQLFPPLI…QRMKESSFYS (118 aa)). An AF2; mediates transcriptional activation region spans residues 71–180 (LINLLLSIEP…QRMKESSFYS (110 aa)). Residue arginine 150 participates in progesterone binding.

This sequence belongs to the nuclear hormone receptor family. NR3 subfamily. As to quaternary structure, interacts with SMARD1 and UNC45A. Interacts with CUEDC2; the interaction promotes ubiquitination, decreases sumoylation, and represses transcriptional activity. Interacts with PIAS3; the interaction promotes sumoylation of PR in a hormone-dependent manner, inhibits DNA-binding, and alters nuclear export. Interacts with SP1; the interaction requires ligand-induced phosphorylation by ERK1/2-MAPK. Interacts with PRMT2. Interacts with NCOA2 and NCOA1. Interacts with KLF9. Interacts with GTF2B. In terms of processing, phosphorylated on multiple serine sites. Several of these sites are hormone-dependent. Sumoylation is hormone-dependent and represses transcriptional activity. Sumoylation on all three sites is enhanced by PIAS3. Desumoylated by SENP1. Sumoylation is repressed by ubiquitination and modulated by phosphorylation. Post-translationally, ubiquitination is hormone-dependent and represses sumoylation. In terms of processing, palmitoylated by ZDHHC7 and ZDHHC21. Palmitoylation is required for plasma membrane targeting and for rapid intracellular signaling via ERK and AKT kinases and cAMP generation.

The protein resides in the nucleus. It is found in the cytoplasm. In terms of biological role, the steroid hormones and their receptors are involved in the regulation of eukaryotic gene expression and affect cellular proliferation and differentiation in target tissues. Transcriptional activator of several progesteron-dependent promoters in a variety of cell types. Involved in activation of SRC-dependent MAPK signaling on hormone stimulation. The chain is Progesterone receptor (PGR) from Notamacropus eugenii (Tammar wallaby).